A 647-amino-acid chain; its full sequence is MFQDNPLLAQLKEKLHSQTPRVEGVVKGTEKGFGFLEVDAQKSYFIPPPFMKKVMHGDRVSAVIQSDKDREVADPETLIEPFLTRFVGRVQKKDDRLSIIPDHPLLKDAIQCRPERSVKHDFQAGDWAVAEMRRHPLKGDRTFYAELTEFITTAEDHLAPWWVTLSRHNLEREAPDVTTPQSMLDEQLEREDLTSLPFVTIDSASTEDMDDALYVEDAGNGALKLIVAIADPTAYVPVGSKLDAVAAERAFTNYLPGFNIPMLPRQLSDDICSLRPHERRPVLACRITLAADGTPADDVQFFAAWIESHAKLAYNDVSDWLETGGSSAWQPENEAIANQIRLLNRLCLARSEWRQAHALVFKDRPDFRFLLGEKGEVLDIIAEHRRIANRIVEESMILANICAATVLRDRLGFGIYNVHLGFDEANAEQAAAVLANHGVTADPLAIATLEGFRNLRRELDALPTQFLDSRIRRFQSFAEVSTTPGPHFGLGLEAYATWTSPIRKYGDMVNHRLLKAIIKGEQSARPADELSLKMAERRRQNRMAERDVGDWLYSRFLQKAAGSEQRFSAEVIDVSRGGMRVRLQENGAVAFIPAPFIHAVRDEMVCSNENGSVQIKGEVAYRVTDLIEVTIAEVRMETRSIVARPVA.

The 330-residue stretch at 190-519 folds into the RNB domain; the sequence is REDLTSLPFV…NHRLLKAIIK (330 aa). An S1 motif domain is found at 564–646; the sequence is EQRFSAEVID…ETRSIVARPV (83 aa).

This sequence belongs to the RNR ribonuclease family. RNase II subfamily.

Its subcellular location is the cytoplasm. It carries out the reaction Exonucleolytic cleavage in the 3'- to 5'-direction to yield nucleoside 5'-phosphates.. Functionally, involved in mRNA degradation. Hydrolyzes single-stranded polyribonucleotides processively in the 3' to 5' direction. This Erwinia tasmaniensis (strain DSM 17950 / CFBP 7177 / CIP 109463 / NCPPB 4357 / Et1/99) protein is Exoribonuclease 2.